A 389-amino-acid chain; its full sequence is Chaperone protein DnaJ (389 aa).

The J domain maps to 6-70 (DYYEILGLSK…EKRAQYDRFG (65 aa)). A CR-type zinc finger spans residues 131–213 (GVRKDIDIPR…CSGAGRVRSR (83 aa)). Residues Cys-144, Cys-147, Cys-161, Cys-164, Cys-187, Cys-190, Cys-201, and Cys-204 each coordinate Zn(2+). CXXCXGXG motif repeat units lie at residues 144–151 (CSTCSGTG), 161–168 (CPNCGGTG), 187–194 (CSACHGRG), and 201–208 (CPTCSGAG). Positions 145-167 (STCSGTGAKPGTSPKRCPNCGGT) are disordered. The disordered stretch occupies residues 351–389 (LSNGKKPEAEERSRSDKQKSEKPRKSKGLFEKVKDAFES). Residues 355-389 (KKPEAEERSRSDKQKSEKPRKSKGLFEKVKDAFES) show a composition bias toward basic and acidic residues.

Belongs to the DnaJ family. In terms of assembly, homodimer. Requires Zn(2+) as cofactor.

Its subcellular location is the cytoplasm. Participates actively in the response to hyperosmotic and heat shock by preventing the aggregation of stress-denatured proteins and by disaggregating proteins, also in an autonomous, DnaK-independent fashion. Unfolded proteins bind initially to DnaJ; upon interaction with the DnaJ-bound protein, DnaK hydrolyzes its bound ATP, resulting in the formation of a stable complex. GrpE releases ADP from DnaK; ATP binding to DnaK triggers the release of the substrate protein, thus completing the reaction cycle. Several rounds of ATP-dependent interactions between DnaJ, DnaK and GrpE are required for fully efficient folding. Also involved, together with DnaK and GrpE, in the DNA replication of plasmids through activation of initiation proteins. In Methanosarcina mazei (strain ATCC BAA-159 / DSM 3647 / Goe1 / Go1 / JCM 11833 / OCM 88) (Methanosarcina frisia), this protein is Chaperone protein DnaJ.